The primary structure comprises 578 residues: Ribonuclease SLFN12 (578 aa).

Residue Ser368 is modified to Phosphoserine. Positions 551-560 (AENLYQIIGI) are mediates interaction with PDE3A. Ser573 carries the phosphoserine modification.

It belongs to the Schlafen family. Subgroup II subfamily. In terms of assembly, homodimer. Interacts with PDE3A; direct low affinity interaction which is stimulated by binding of 17beta-estradiol/E2 to PDE3A and that positively regulates the ribonuclease activity of SLFN12. Interacts with SERPINB12; as part of a pathway regulating cell differentiation. In terms of processing, phosphorylation at Ser-368 and Ser-573 negatively regulates the ribonuclease activity. Dephosphorylation is induced by the interaction with PDE3A and stimulates the rRNA ribonuclease activity.

Its subcellular location is the nucleus. The protein localises to the cytoplasm. It localises to the cytosol. Its function is as follows. Ribonuclease which is part of an E2/17beta-estradiol-induced pro-apoptotic signaling pathway. E2 stabilizes the PDE3A/SLFN12 complex in the cytosol, promoting the dephosphorylation of SLFN12 and activating its pro-apoptotic ribosomal RNA/rRNA ribonuclease activity. This apoptotic pathway might be relevant in tissues with high concentration of E2 and be for instance involved in placenta remodeling. May play a role in cell differentiation. This chain is Ribonuclease SLFN12, found in Homo sapiens (Human).